The primary structure comprises 310 residues: ADP-L-glycero-D-manno-heptose-6-epimerase (310 aa).

NADP(+) contacts are provided by residues 10-11, 31-32, Lys38, Lys53, 75-79, and Asn92; these read FI, DN, and EGACS. Tyr140 functions as the Proton acceptor in the catalytic mechanism. NADP(+) is bound at residue Lys144. Asn169 provides a ligand contact to substrate. NADP(+) is bound by residues Val170 and Lys178. Lys178 serves as the catalytic Proton acceptor. Substrate contacts are provided by residues Ser180, His187, 201-204, and Arg209; that span reads FEGS. An N6-acetyllysine modification is found at Lys267. Tyr272 lines the substrate pocket.

The protein belongs to the NAD(P)-dependent epimerase/dehydratase family. HldD subfamily. As to quaternary structure, homopentamer. It depends on NADP(+) as a cofactor.

The catalysed reaction is ADP-D-glycero-beta-D-manno-heptose = ADP-L-glycero-beta-D-manno-heptose. The protein operates within nucleotide-sugar biosynthesis; ADP-L-glycero-beta-D-manno-heptose biosynthesis; ADP-L-glycero-beta-D-manno-heptose from D-glycero-beta-D-manno-heptose 7-phosphate: step 4/4. Catalyzes the interconversion between ADP-D-glycero-beta-D-manno-heptose and ADP-L-glycero-beta-D-manno-heptose via an epimerization at carbon 6 of the heptose. This Escherichia coli (strain ATCC 8739 / DSM 1576 / NBRC 3972 / NCIMB 8545 / WDCM 00012 / Crooks) protein is ADP-L-glycero-D-manno-heptose-6-epimerase.